Here is a 306-residue protein sequence, read N- to C-terminus: Homoserine kinase (306 aa).

An ATP-binding site is contributed by 90-100; it reads PLARGLGSSAS.

Belongs to the GHMP kinase family. Homoserine kinase subfamily.

The protein resides in the cytoplasm. The enzyme catalyses L-homoserine + ATP = O-phospho-L-homoserine + ADP + H(+). It participates in amino-acid biosynthesis; L-threonine biosynthesis; L-threonine from L-aspartate: step 4/5. Its function is as follows. Catalyzes the ATP-dependent phosphorylation of L-homoserine to L-homoserine phosphate. This chain is Homoserine kinase, found in Staphylococcus epidermidis (strain ATCC 35984 / DSM 28319 / BCRC 17069 / CCUG 31568 / BM 3577 / RP62A).